The chain runs to 450 residues: Cell division cycle 20.5, cofactor of APC complex (450 aa).

7 WD repeats span residues A129–L166, E171–T210, G214–E251, G255–P294, E304–S346, E348–E389, and G392–T431.

Belongs to the WD repeat CDC20/Fizzy family. In terms of assembly, the APC/C is composed of at least 11 subunits that stay tightly associated throughout the cell cycle. Binds to GIG1 and PYM. Part of the mitotic checkpoint complex (MCC); interacts with MAD2 and BUB1.

Its subcellular location is the nucleus. It participates in protein modification; protein ubiquitination. Its function is as follows. Component of the anaphase promoting complex/cyclosome (APC/C), a cell cycle-regulated E3 ubiquitin-protein ligase complex that controls progression through mitosis and the G1 phase of the cell cycle. The polypeptide is Cell division cycle 20.5, cofactor of APC complex (CDC20-5) (Arabidopsis thaliana (Mouse-ear cress)).